Reading from the N-terminus, the 165-residue chain is Phosphopantetheine adenylyltransferase (165 aa).

Thr9 lines the substrate pocket. ATP contacts are provided by residues 9 to 10 and His17; that span reads TF. Substrate contacts are provided by Lys41, Leu73, and Arg87. ATP-binding positions include 88–90, Glu98, and 123–129; these read GLR and LQPIASR.

Belongs to the bacterial CoaD family. In terms of assembly, homohexamer. Requires Mg(2+) as cofactor.

It is found in the cytoplasm. It catalyses the reaction (R)-4'-phosphopantetheine + ATP + H(+) = 3'-dephospho-CoA + diphosphate. It participates in cofactor biosynthesis; coenzyme A biosynthesis; CoA from (R)-pantothenate: step 4/5. Its function is as follows. Reversibly transfers an adenylyl group from ATP to 4'-phosphopantetheine, yielding dephospho-CoA (dPCoA) and pyrophosphate. The sequence is that of Phosphopantetheine adenylyltransferase from Rhizorhabdus wittichii (strain DSM 6014 / CCUG 31198 / JCM 15750 / NBRC 105917 / EY 4224 / RW1) (Sphingomonas wittichii).